The chain runs to 550 residues: Arginine--tRNA ligase (550 aa).

The short motif at 130–140 (ANPTGPIHIGG) is the 'HIGH' region element.

The protein belongs to the class-I aminoacyl-tRNA synthetase family. In terms of assembly, monomer.

The protein localises to the cytoplasm. It carries out the reaction tRNA(Arg) + L-arginine + ATP = L-arginyl-tRNA(Arg) + AMP + diphosphate. This chain is Arginine--tRNA ligase, found in Mycobacterium marinum (strain ATCC BAA-535 / M).